The primary structure comprises 205 residues: Small ribosomal subunit protein uS4c (205 aa).

In terms of domain architecture, S4 RNA-binding spans 93–156; that stretch reads MRLDNTVFRL…KSRNLVLNNL (64 aa).

This sequence belongs to the universal ribosomal protein uS4 family. In terms of assembly, part of the 30S ribosomal subunit. Contacts protein S5. The interaction surface between S4 and S5 is involved in control of translational fidelity.

Its subcellular location is the plastid. It is found in the chloroplast. Functionally, one of the primary rRNA binding proteins, it binds directly to 16S rRNA where it nucleates assembly of the body of the 30S subunit. Its function is as follows. With S5 and S12 plays an important role in translational accuracy. This is Small ribosomal subunit protein uS4c (rps4) from Mesostigma viride (Green alga).